The sequence spans 189 residues: Elongation factor P (189 aa).

The protein belongs to the elongation factor P family.

Its subcellular location is the cytoplasm. The protein operates within protein biosynthesis; polypeptide chain elongation. Functionally, involved in peptide bond synthesis. Stimulates efficient translation and peptide-bond synthesis on native or reconstituted 70S ribosomes in vitro. Probably functions indirectly by altering the affinity of the ribosome for aminoacyl-tRNA, thus increasing their reactivity as acceptors for peptidyl transferase. The protein is Elongation factor P of Orientia tsutsugamushi (strain Ikeda) (Rickettsia tsutsugamushi).